The following is a 325-amino-acid chain: Small ribosomal subunit protein uS2 (325 aa).

Positions 212–226 (KEEQAKAEAERERLA) are enriched in basic and acidic residues. Residues 212–325 (KEEQAKAEAE…TEPKASTGNW (114 aa)) are disordered. Composition is skewed to low complexity over residues 234–247 (QPAA…QWAD) and 261–289 (PVTT…TGSG). The segment covering 290–300 (FNQDDWSVPTT) has biased composition (polar residues).

It belongs to the universal ribosomal protein uS2 family. As to quaternary structure, component of the small ribosomal subunit. Mature ribosomes consist of a small (40S) and a large (60S) subunit. The 40S subunit contains about 33 different proteins and 1 molecule of RNA (18S). The 60S subunit contains about 49 different proteins and 3 molecules of RNA (28S, 5.8S and 5S). Interacts with ribosomal protein S21.

Its subcellular location is the cytoplasm. In terms of biological role, required for the assembly and/or stability of the 40S ribosomal subunit. Required for the processing of the 20S rRNA-precursor to mature 18S rRNA in a late step of the maturation of 40S ribosomal subunits. The chain is Small ribosomal subunit protein uS2 from Suberites domuncula (Sponge).